We begin with the raw amino-acid sequence, 364 residues long: Aminomethyltransferase (364 aa).

Belongs to the GcvT family. The glycine cleavage system is composed of four proteins: P, T, L and H.

It carries out the reaction N(6)-[(R)-S(8)-aminomethyldihydrolipoyl]-L-lysyl-[protein] + (6S)-5,6,7,8-tetrahydrofolate = N(6)-[(R)-dihydrolipoyl]-L-lysyl-[protein] + (6R)-5,10-methylene-5,6,7,8-tetrahydrofolate + NH4(+). The glycine cleavage system catalyzes the degradation of glycine. The chain is Aminomethyltransferase from Staphylococcus carnosus (strain TM300).